The sequence spans 423 residues: Histidine--tRNA ligase (423 aa).

It belongs to the class-II aminoacyl-tRNA synthetase family. Homodimer.

It is found in the cytoplasm. It catalyses the reaction tRNA(His) + L-histidine + ATP = L-histidyl-tRNA(His) + AMP + diphosphate + H(+). The protein is Histidine--tRNA ligase of Shewanella loihica (strain ATCC BAA-1088 / PV-4).